The primary structure comprises 465 residues: Plasma alpha-L-fucosidase (465 aa).

The signal sequence occupies residues 1-26 (MRPQELPRLAFPLLLLLLLPPPPCPA). N-linked (GlcNAc...) asparagine glycosylation is found at Asn169 and Asn237. Ser299 is subject to Phosphoserine. An N-linked (GlcNAc...) asparagine glycan is attached at Asn375.

This sequence belongs to the glycosyl hydrolase 29 family. In terms of assembly, homotetramer.

Its subcellular location is the secreted. The enzyme catalyses an alpha-L-fucoside + H2O = L-fucose + an alcohol. Its function is as follows. Alpha-L-fucosidase is responsible for hydrolyzing the alpha-1,6-linked fucose joined to the reducing-end N-acetylglucosamine of the carbohydrate moieties of glycoproteins. This is Plasma alpha-L-fucosidase (FUCA2) from Pongo abelii (Sumatran orangutan).